Here is a 363-residue protein sequence, read N- to C-terminus: LIM and cysteine-rich domains protein 1 (363 aa).

Serine 16 is modified (phosphoserine). The PET domain occupies 99–206 (MIMTNPIATG…GEVALPGQGG (108 aa)). The disordered stretch occupies residues 200–233 (ALPGQGGLPKEEGKQQEKPEGAETAAPTANGSLG). Over residues 208 to 220 (PKEEGKQQEKPEG) the composition is skewed to basic and acidic residues. LIM zinc-binding domains follow at residues 239-304 (YVCE…SLRP) and 305-363 (RCSG…SKRT).

In terms of assembly, interacts with beta-dystroglycan. Interacts with GATA1, GATA4 and GATA6. In terms of tissue distribution, highly expressed in both skeletal muscle and cardiac muscle.

Its subcellular location is the cytoplasm. It localises to the nucleus. Transcriptional cofactor that restricts GATA6 function by inhibiting DNA-binding, resulting in repression of GATA6 transcriptional activation of downstream target genes. Represses GATA6-mediated trans activation of lung- and cardiac tissue-specific promoters. Inhibits DNA-binding by GATA4 and GATA1 to the cTNC promoter. Plays a critical role in the development of cardiac hypertrophy via activation of calcineurin/nuclear factor of activated T-cells signaling pathway. The sequence is that of LIM and cysteine-rich domains protein 1 (LMCD1) from Sus scrofa (Pig).